Consider the following 349-residue polypeptide: Nicotinate-nucleotide--dimethylbenzimidazole phosphoribosyltransferase (349 aa).

A disordered region spans residues 1–20; it reads MEFATVSPPDPGTAAAARAR. Glutamate 313 functions as the Proton acceptor in the catalytic mechanism.

Belongs to the CobT family.

It carries out the reaction 5,6-dimethylbenzimidazole + nicotinate beta-D-ribonucleotide = alpha-ribazole 5'-phosphate + nicotinate + H(+). It functions in the pathway nucleoside biosynthesis; alpha-ribazole biosynthesis; alpha-ribazole from 5,6-dimethylbenzimidazole: step 1/2. Its function is as follows. Catalyzes the synthesis of alpha-ribazole-5'-phosphate from nicotinate mononucleotide (NAMN) and 5,6-dimethylbenzimidazole (DMB). The sequence is that of Nicotinate-nucleotide--dimethylbenzimidazole phosphoribosyltransferase from Mycolicibacterium paratuberculosis (strain ATCC BAA-968 / K-10) (Mycobacterium paratuberculosis).